The chain runs to 239 residues: Probable transcriptional regulatory protein Aave_3203 (239 aa).

The segment at 1–20 (MAGHSKWANIQHRKGRQDEK) is disordered.

It belongs to the TACO1 family.

The protein resides in the cytoplasm. The sequence is that of Probable transcriptional regulatory protein Aave_3203 from Paracidovorax citrulli (strain AAC00-1) (Acidovorax citrulli).